The following is a 305-amino-acid chain: P2Y purinoceptor 14 (305 aa).

The Extracellular portion of the chain corresponds to 1 to 29 (MDNTTTTEPPKQPCTRNTLITQQIIPMLY). Asn-3 is a glycosylation site (N-linked (GlcNAc...) asparagine). The chain crosses the membrane as a helical span at residues 30-50 (CVVFITGVLLNGISGWIFFYV). Topologically, residues 51 to 55 (PSSKS) are cytoplasmic. The helical transmembrane segment at 56–76 (FIIYLKNIVVADFLMGLTFPF) threads the bilayer. The Extracellular portion of the chain corresponds to 77-96 (KVLSDSGLGPWQLNVFVFRV). Residues 97–117 (SAVIFYVNMYVSIAFFGLISF) form a helical membrane-spanning segment. At 118–139 (DRYYKIVKPLLVSIVQSVNYSK) the chain is on the cytoplasmic side. Residues 140-160 (VLSVLVWVLMLLLAVPNIILT) form a helical membrane-spanning segment. Residue Asn-161 is glycosylated (N-linked (GlcNAc...) asparagine). The Extracellular segment spans residues 161–188 (NQSVKDVTNIQCMELKNELGRKWHKASN). A helical transmembrane segment spans residues 189–209 (YVFVSIFWIVFLLLTVFYMAI). Over 210–234 (TRKIFKSHLKSRKNSISVKRKSSRN) the chain is Cytoplasmic. Residues 235–255 (IFSIVLAFVACFAPYHVARIP) form a helical membrane-spanning segment. The Extracellular portion of the chain corresponds to 256–278 (YTKSQTEGHYSCQAKETLLYTKE). Residues 279-299 (FTLLLSAANVCLDPISISSYA) traverse the membrane as a helical segment. Residues 300–305 (SRLEKS) are Cytoplasmic-facing.

It belongs to the G-protein coupled receptor 1 family.

Its subcellular location is the cell membrane. Receptor for UDP-glucose coupled to G-proteins. This is P2Y purinoceptor 14 (P2ry14) from Rattus norvegicus (Rat).